The sequence spans 757 residues: Elongation factor G, mitochondrial (757 aa).

The transit peptide at 1 to 41 directs the protein to the mitochondrion; sequence MLERAALLHRLRLPAHSLPFIYNGALFGGAKRSFSATSKRC. Residues 66–347 form the tr-type G domain; the sequence is KLLRNIGVSA…AIVDYLPEPS (282 aa). GTP is bound by residues 75 to 82, 146 to 150, and 200 to 203; these read AHIDSGKT, DTPGH, and NKMD.

The protein belongs to the TRAFAC class translation factor GTPase superfamily. Classic translation factor GTPase family. EF-G/EF-2 subfamily.

Its subcellular location is the mitochondrion. The protein operates within protein biosynthesis; polypeptide chain elongation. Its function is as follows. Mitochondrial GTPase that catalyzes the GTP-dependent ribosomal translocation step during translation elongation. During this step, the ribosome changes from the pre-translocational (PRE) to the post-translocational (POST) state as the newly formed A-site-bound peptidyl-tRNA and P-site-bound deacylated tRNA move to the P and E sites, respectively. Catalyzes the coordinated movement of the two tRNA molecules, the mRNA and conformational changes in the ribosome. The polypeptide is Elongation factor G, mitochondrial (Eremothecium gossypii (strain ATCC 10895 / CBS 109.51 / FGSC 9923 / NRRL Y-1056) (Yeast)).